A 366-amino-acid polypeptide reads, in one-letter code: Glucan organizing enzyme 1 (366 aa).

Residues 1-24 are Extracellular-facing; sequence MLPLWARGGKPIVIPLPQKRHITL. A helical membrane pass occupies residues 25–45; it reads PALPILLLLLGTGFLLHSLFF. The Cytoplasmic segment spans residues 46 to 366; that stretch reads PPPPPHPPGK…ETYKKWKRGH (321 aa).

Belongs to the glycosyltransferase 32 family.

Its subcellular location is the cell membrane. Functionally, plays a role in the localization of glycogen rosettes to the plasma membrane. Required for correct cell wall organization and may facilitate the connection between beta-1,3-glucan and beta-1,6-glucan in the cell wall. The protein is Glucan organizing enzyme 1 of Cryptococcus neoformans var. grubii serotype A (strain H99 / ATCC 208821 / CBS 10515 / FGSC 9487) (Filobasidiella neoformans var. grubii).